We begin with the raw amino-acid sequence, 434 residues long: Trigger factor (434 aa).

One can recognise a PPIase FKBP-type domain in the interval 161–246 (KDIVTIDFKG…IHKVEEPQLP (86 aa)).

This sequence belongs to the FKBP-type PPIase family. Tig subfamily.

The protein localises to the cytoplasm. It catalyses the reaction [protein]-peptidylproline (omega=180) = [protein]-peptidylproline (omega=0). Involved in protein export. Acts as a chaperone by maintaining the newly synthesized protein in an open conformation. Functions as a peptidyl-prolyl cis-trans isomerase. The sequence is that of Trigger factor from Marinobacter nauticus (strain ATCC 700491 / DSM 11845 / VT8) (Marinobacter aquaeolei).